The primary structure comprises 474 residues: Dihydrolipoyl dehydrogenase (474 aa).

Residues 39–47 (EKDAYGGTC), K56, and A118 contribute to the FAD site. An intrachain disulfide couples C47 to C52. Residues 186 to 190 (GGGYI), E209, and 275 to 278 (AVGR) contribute to the NAD(+) site. FAD contacts are provided by D318 and A326. Residue H450 is the Proton acceptor of the active site.

Belongs to the class-I pyridine nucleotide-disulfide oxidoreductase family. As to quaternary structure, homodimer. FAD serves as cofactor.

The protein localises to the cytoplasm. It catalyses the reaction N(6)-[(R)-dihydrolipoyl]-L-lysyl-[protein] + NAD(+) = N(6)-[(R)-lipoyl]-L-lysyl-[protein] + NADH + H(+). The polypeptide is Dihydrolipoyl dehydrogenase (lpdA) (Halobacterium salinarum (strain ATCC 700922 / JCM 11081 / NRC-1) (Halobacterium halobium)).